The primary structure comprises 242 residues: MVDYYEVLGVPRQASAEAIRKAYRKLALKWHPDKNPEHKEEAERRFKQVAQAYEVLSDVRKREVYDRCGEVGEVGGGGAAGSPFHDAFQYVFSFRDPAEVFREFFGGHDPFSFDFFGGDPLENFFGDRRSTRGSRSRGAVPFSTSFTEFPGFGGGFASLDTGFTSFGSPGNSGLSSFSMSCGGGAAGNYKSVSTSTEIINGKKITTKRIVENGQERVEVEEDGELKSLIINGREQLLRINTQ.

In terms of domain architecture, J spans 1-69; sequence MVDYYEVLGV…RKREVYDRCG (69 aa).

Testis specific. Expression is confined to the germline without any contribution of the somatic components.

May operate as a co-chaperone of the male germ cell- and haploid stage-specific Hsp70 proteins. This Mus musculus (Mouse) protein is DnaJ homolog subfamily B member 3 (Dnajb3).